The primary structure comprises 358 residues: MTYNLKKYIRTDLEDFAGYSACKAPELVKTSKLIIKLDANENLYGAAPTVRQAMAEFNQYHIYPDATQSEIRRLLSEYTGVAVEQIVCGAGSDQLIDLLLRLFINPGDEVINCPPTFAMYKFYTELNRGKIVNVPRDASYNINIAAINNAITPQTKLIFIAAPNNPTGTAISKEEIRQILDLGVPTVVDEAYYEFTGQTMVSDMSKYPNLMILRTFSKWAGLAGLRVGYGLFPPIIADYLSRIKDPYSVNIAADAAIRQTMLQREYMLETVKKIVNERQRLYTELSKFGWLKPYPSVANFILCKLLKGKAKEVQHELESKGILVRCFDAPMMENCLRFSVGKPEDTDGLLKALGEMGE.

N6-(pyridoxal phosphate)lysine is present on lysine 218.

This sequence belongs to the class-II pyridoxal-phosphate-dependent aminotransferase family. Histidinol-phosphate aminotransferase subfamily. As to quaternary structure, homodimer. Pyridoxal 5'-phosphate is required as a cofactor.

The catalysed reaction is L-histidinol phosphate + 2-oxoglutarate = 3-(imidazol-4-yl)-2-oxopropyl phosphate + L-glutamate. It participates in amino-acid biosynthesis; L-histidine biosynthesis; L-histidine from 5-phospho-alpha-D-ribose 1-diphosphate: step 7/9. The protein is Histidinol-phosphate aminotransferase of Dehalococcoides mccartyi (strain CBDB1).